The primary structure comprises 382 residues: G-box-binding factor 3 (382 aa).

Over residues 1–16 (MGNSSEEPKPPTKSDK) the composition is skewed to basic and acidic residues. Disordered stretches follow at residues 1 to 26 (MGNS…DQTN), 97 to 221 (MGSL…GVKL), and 257 to 285 (EREL…AETE). A compositionally biased stretch (polar residues) spans 111 to 130 (TPGTLLSIDTPTKSTGNTDN). Positions 155-165 (ADEHKRSRNSS) are enriched in basic and acidic residues. Over residues 166 to 181 (ETDGSTDGSDGNTTGA) the composition is skewed to low complexity. A compositionally biased stretch (basic and acidic residues) spans 182 to 199 (DEPKLKRSREGTPTKDGK). Polar residues predominate over residues 202–216 (VQASSFHSVSPSSGD). Residues 259-322 (ELKRERRKQS…DKLRGANATL (64 aa)) enclose the bZIP domain. The basic motif stretch occupies residues 261–280 (KRERRKQSNRESARRSRLRK). A leucine-zipper region spans residues 287–322 (LARKVEALTAENMALRSELNQLNEKSDKLRGANATL). A disordered region spans residues 329-382 (SEPEKRVPANMLSRVKNSGAGDKNKNQGDNDSNSTSKLHQLLDTKPRAKAVAAG). The span at 357-366 (DNDSNSTSKL) shows a compositional bias: polar residues.

It belongs to the bZIP family. DNA-binding heterodimer. Interacts with GBF4. Interacts with BZIP16 and BZIP68. As to expression, present only in dark grown leaves and roots.

Its subcellular location is the nucleus. Binds to the G-box motif (5'-CCACGTGG-3') of the rbcS-1A gene promoter. G-box and G-box-like motifs are cis-acting elements defined in promoters of certain plant genes which are regulated by such diverse stimuli as light-induction or hormone control. The polypeptide is G-box-binding factor 3 (GBF3) (Arabidopsis thaliana (Mouse-ear cress)).